We begin with the raw amino-acid sequence, 129 residues long: Urease subunit beta (129 aa).

The protein belongs to the urease beta subunit family. Heterotrimer of UreA (gamma), UreB (beta) and UreC (alpha) subunits. Three heterotrimers associate to form the active enzyme.

Its subcellular location is the cytoplasm. It catalyses the reaction urea + 2 H2O + H(+) = hydrogencarbonate + 2 NH4(+). It functions in the pathway nitrogen metabolism; urea degradation; CO(2) and NH(3) from urea (urease route): step 1/1. This is Urease subunit beta from Photorhabdus laumondii subsp. laumondii (strain DSM 15139 / CIP 105565 / TT01) (Photorhabdus luminescens subsp. laumondii).